Here is a 71-residue protein sequence, read N- to C-terminus: Exodeoxyribonuclease 7 small subunit (71 aa).

It belongs to the XseB family. As to quaternary structure, heterooligomer composed of large and small subunits.

The protein localises to the cytoplasm. The enzyme catalyses Exonucleolytic cleavage in either 5'- to 3'- or 3'- to 5'-direction to yield nucleoside 5'-phosphates.. Functionally, bidirectionally degrades single-stranded DNA into large acid-insoluble oligonucleotides, which are then degraded further into small acid-soluble oligonucleotides. The sequence is that of Exodeoxyribonuclease 7 small subunit from Clostridium botulinum (strain Kyoto / Type A2).